The sequence spans 60 residues: Large ribosomal subunit protein bL32 (60 aa).

Over residues 1-16 (MAVPRRKTSPSRRGMR) the composition is skewed to basic residues. The segment at 1-60 (MAVPRRKTSPSRRGMRRSADAIKKPTYVEDKDSGELRRPHHLDLKTGMYKGRQVLKKKDA) is disordered. Residues 17-44 (RSADAIKKPTYVEDKDSGELRRPHHLDL) show a composition bias toward basic and acidic residues.

The protein belongs to the bacterial ribosomal protein bL32 family.

The protein is Large ribosomal subunit protein bL32 of Bradyrhizobium sp. (strain BTAi1 / ATCC BAA-1182).